The primary structure comprises 1380 residues: Tripeptidyl-peptidase 2 (1380 aa).

Residues 110–619 enclose the Peptidase S8 domain; the sequence is STFIASLMPK…QGLMQVDKAY (510 aa). Active-site charge relay system residues include aspartate 145, histidine 372, and serine 558. A disordered region spans residues 1099–1143; the sequence is DEKEGKNPKDNPVSYPISYVVPPNKPEEDKKAASAPTCSKSVSER. Positions 1110-1120 are enriched in low complexity; sequence PVSYPISYVVP. 2 coiled-coil regions span residues 1152 to 1181 and 1238 to 1300; these read KIKF…KSEY and EDDE…ELTK.

Belongs to the peptidase S8 family. As to quaternary structure, assembles into a large oligomeric complex containing two related proteins 153 and 142 kDa that are derived from the single TPP2 gene. The 142 kDa form mainly differs from the 153 kDa form by a truncation at the C-terminal end.

It catalyses the reaction Release of an N-terminal tripeptide from a polypeptide.. Its activity is regulated as follows. Inhibited by alanine-alanine-phenylalanine-chloromethylketone, butabindide and phenylmethanesulfonyl fluoride (PMSF), but not by leupeptin, N-ethylmaleimide, EDTA, MG132 and lactacystin. In terms of biological role, serine protease of the proteasome pathway that may function with the 20S proteasome to degrade oxidized proteins generated by environmental stress. The chain is Tripeptidyl-peptidase 2 (TPP2) from Arabidopsis thaliana (Mouse-ear cress).